The following is a 284-amino-acid chain: tRNA dimethylallyltransferase (284 aa).

Position 6-13 (6-13 (GPTASGKS)) interacts with ATP. 8 to 13 (TASGKS) contacts substrate. The interval 31 to 34 (DSLS) is interaction with substrate tRNA.

It belongs to the IPP transferase family. As to quaternary structure, monomer. Mg(2+) serves as cofactor.

It carries out the reaction adenosine(37) in tRNA + dimethylallyl diphosphate = N(6)-dimethylallyladenosine(37) in tRNA + diphosphate. Its function is as follows. Catalyzes the transfer of a dimethylallyl group onto the adenine at position 37 in tRNAs that read codons beginning with uridine, leading to the formation of N6-(dimethylallyl)adenosine (i(6)A). The protein is tRNA dimethylallyltransferase of Nautilia profundicola (strain ATCC BAA-1463 / DSM 18972 / AmH).